The sequence spans 446 residues: Maltoporin (446 aa).

Positions 1–25 are cleaved as a signal peptide; it reads MMITLRKLPLAVAVAAGVMSAQAMA.

It belongs to the porin LamB (TC 1.B.3) family. As to quaternary structure, homotrimer formed of three 18-stranded antiparallel beta-barrels, containing three independent channels.

The protein localises to the cell outer membrane. It carries out the reaction beta-maltose(in) = beta-maltose(out). In terms of biological role, involved in the transport of maltose and maltodextrins. This is Maltoporin from Escherichia coli O6:K15:H31 (strain 536 / UPEC).